The chain runs to 148 residues: Nucleoside diphosphate kinase (148 aa).

The ATP site is built by Lys9, Phe57, Arg85, Thr91, Arg102, and Asn112. Residue His115 is the Pros-phosphohistidine intermediate of the active site.

This sequence belongs to the NDK family. Mg(2+) is required as a cofactor.

The catalysed reaction is a 2'-deoxyribonucleoside 5'-diphosphate + ATP = a 2'-deoxyribonucleoside 5'-triphosphate + ADP. It catalyses the reaction a ribonucleoside 5'-diphosphate + ATP = a ribonucleoside 5'-triphosphate + ADP. Functionally, major role in the synthesis of nucleoside triphosphates other than ATP. The ATP gamma phosphate is transferred to the NDP beta phosphate via a ping-pong mechanism, using a phosphorylated active-site intermediate. This chain is Nucleoside diphosphate kinase, found in Helianthus annuus (Common sunflower).